Consider the following 257-residue polypeptide: S-methyl-5'-thioadenosine phosphorylase (257 aa).

Phosphate is bound by residues S10 and 50–51 (RH). The cysteines at positions 130 and 195 are disulfide-linked. Residue M180 coordinates substrate. Phosphate is bound at residue T181. 204–206 (DYD) contacts substrate. C246 and C248 form a disulfide bridge.

It belongs to the PNP/MTAP phosphorylase family. MTAP subfamily. As to quaternary structure, homohexamer. Dimer of a homotrimer.

It carries out the reaction S-methyl-5'-thioadenosine + phosphate = 5-(methylsulfanyl)-alpha-D-ribose 1-phosphate + adenine. The protein operates within amino-acid biosynthesis; L-methionine biosynthesis via salvage pathway; S-methyl-5-thio-alpha-D-ribose 1-phosphate from S-methyl-5'-thioadenosine (phosphorylase route): step 1/1. Its function is as follows. Catalyzes the reversible phosphorylation of S-methyl-5'-thioadenosine (MTA) to adenine and 5-methylthioribose-1-phosphate. Involved in the breakdown of MTA, a major by-product of polyamine biosynthesis. Responsible for the first step in the methionine salvage pathway after MTA has been generated from S-adenosylmethionine. Has broad substrate specificity with 6-aminopurine nucleosides as preferred substrates. The protein is S-methyl-5'-thioadenosine phosphorylase of Pyrococcus furiosus (strain ATCC 43587 / DSM 3638 / JCM 8422 / Vc1).